A 431-amino-acid chain; its full sequence is Ribosomal protein uS12 methylthiotransferase RimO (431 aa).

An MTTase N-terminal domain is found at 4–120 (HKLFLLSLGC…ILAALGAAYH (117 aa)). Cys-13, Cys-49, Cys-83, Cys-144, Cys-148, and Cys-151 together coordinate [4Fe-4S] cluster. One can recognise a Radical SAM core domain in the interval 130 to 359 (LTPPHYTYLK…MELQESVSQD (230 aa)). The 68-residue stretch at 362–429 (RDFEGKEITV…PFDLVGEVIG (68 aa)) folds into the TRAM domain.

It belongs to the methylthiotransferase family. RimO subfamily. [4Fe-4S] cluster is required as a cofactor.

Its subcellular location is the cytoplasm. The enzyme catalyses L-aspartate(89)-[ribosomal protein uS12]-hydrogen + (sulfur carrier)-SH + AH2 + 2 S-adenosyl-L-methionine = 3-methylsulfanyl-L-aspartate(89)-[ribosomal protein uS12]-hydrogen + (sulfur carrier)-H + 5'-deoxyadenosine + L-methionine + A + S-adenosyl-L-homocysteine + 2 H(+). Catalyzes the methylthiolation of an aspartic acid residue of ribosomal protein uS12. This is Ribosomal protein uS12 methylthiotransferase RimO from Pelodictyon phaeoclathratiforme (strain DSM 5477 / BU-1).